The primary structure comprises 464 residues: Colanic acid biosynthesis protein WcaM (464 aa).

The protein operates within slime biogenesis; slime polysaccharide biosynthesis. This chain is Colanic acid biosynthesis protein WcaM (wcaM), found in Shigella flexneri.